The primary structure comprises 98 residues: MIEKIIKESREGVLIDIDVQANAKKNEIVGINEWRKRLSIKIKAPATEGKANKEIIKFFKEIFKKDVEIVSGKLNPQKTVLIGDIKKDEVIEILKRYL.

This sequence belongs to the UPF0235 family.

The chain is UPF0235 protein MJ0618 from Methanocaldococcus jannaschii (strain ATCC 43067 / DSM 2661 / JAL-1 / JCM 10045 / NBRC 100440) (Methanococcus jannaschii).